Here is a 93-residue protein sequence, read N- to C-terminus: Vacuolar ATPase assembly integral membrane protein VMA21 (93 aa).

At 1-21 (MSNRVSTGKMAMAPQESVQPA) the chain is on the cytoplasmic side. Residues 22–42 (VLYKLVLFALLMAVVPIGTYF) traverse the membrane as a helical segment. Over 43 to 54 (STLNYLWDGSTT) the chain is Lumenal. Residues 55–75 (FAAISAIAAANLILVGYVVVA) form a helical membrane-spanning segment. Residues 76 to 93 (FREDAASRTGPLPEKKTS) are Cytoplasmic-facing. Positions 90 to 93 (KKTS) match the Prevents secretion from ER motif.

The protein belongs to the VMA21 family.

Its subcellular location is the endoplasmic reticulum membrane. The protein localises to the endoplasmic reticulum-Golgi intermediate compartment membrane. It localises to the cytoplasmic vesicle. It is found in the COPII-coated vesicle membrane. Its function is as follows. Required for the assembly of the V0 complex of the vacuolar ATPase (V-ATPase) in the endoplasmic reticulum. This Cryptococcus neoformans var. neoformans serotype D (strain JEC21 / ATCC MYA-565) (Filobasidiella neoformans) protein is Vacuolar ATPase assembly integral membrane protein VMA21.